Consider the following 642-residue polypeptide: MPVITLPDGSKREFANAVSTLDVAADIGPGLAKACIAGRVNGELKDACDLIETDVDLAIITVKDDEGVEILRHSCAHLLGHAIKQMWPETKMAIGPVIDNGFYYDVDLDHKLTEEDVAELEKRMLALAKTNYDVVKRVVSWQEARDTFESRGESYKMAILDENISKDDQPALYHHEEYTDMCRGPHVPNMKFCHHFKLMSVAGAYWRGNSDNKMLQRIYGTAWADKKALKAHLTRLEEAAKRDHRKIGKQLDLYHMQEEAPGMVFWHNDGWSLFLELERFIRQKLGQYTYQEVKGPLMMDRVLWERSGHWDKYSEAMFTTHSENREYAVKPMNCPGHVQIFNQGLKSYRDLPLRMAEFGCCHRNEPSGSLHGLMRVRGFTQDDAHIFCTEEQVQQEVSGCIKMVYDTYATFGFHDIVVKLSTRPEKRIGDDAMWDRAEQALMDALKANDIEYEILPGEGAFYGPKIEFTLHDCLDRAWQCGTVQLDYALPGRLGATYVAEDNSRQTPVMIHRAILGSLERFLGILIEEYAGKFPTWLAPVQAVVMNITDKQSEYVDEVVKLFKDQGIRASKDLRNEKIGFKIREHTLRRVPYLLVVGDQEMENREVAVRTRDGVDLGKIKIDQFAAMVKEQISLRSLNLLEE.

One can recognise a TGS domain in the interval 1-61; it reads MPVITLPDGS…ETDVDLAIIT (61 aa). The segment at 243-534 is catalytic; that stretch reads DHRKIGKQLD…LIEEYAGKFP (292 aa). The Zn(2+) site is built by Cys-334, His-385, and His-511.

The protein belongs to the class-II aminoacyl-tRNA synthetase family. Homodimer. Zn(2+) serves as cofactor.

The protein localises to the cytoplasm. It catalyses the reaction tRNA(Thr) + L-threonine + ATP = L-threonyl-tRNA(Thr) + AMP + diphosphate + H(+). Functionally, catalyzes the attachment of threonine to tRNA(Thr) in a two-step reaction: L-threonine is first activated by ATP to form Thr-AMP and then transferred to the acceptor end of tRNA(Thr). Also edits incorrectly charged L-seryl-tRNA(Thr). The protein is Threonine--tRNA ligase of Shewanella loihica (strain ATCC BAA-1088 / PV-4).